We begin with the raw amino-acid sequence, 245 residues long: Ubiquinone biosynthesis O-methyltransferase (245 aa).

Arg-44, Gly-64, Asp-85, and Met-129 together coordinate S-adenosyl-L-methionine.

Belongs to the methyltransferase superfamily. UbiG/COQ3 family.

The catalysed reaction is a 3-demethylubiquinol + S-adenosyl-L-methionine = a ubiquinol + S-adenosyl-L-homocysteine + H(+). The enzyme catalyses a 3-(all-trans-polyprenyl)benzene-1,2-diol + S-adenosyl-L-methionine = a 2-methoxy-6-(all-trans-polyprenyl)phenol + S-adenosyl-L-homocysteine + H(+). The protein operates within cofactor biosynthesis; ubiquinone biosynthesis. In terms of biological role, O-methyltransferase that catalyzes the 2 O-methylation steps in the ubiquinone biosynthetic pathway. This is Ubiquinone biosynthesis O-methyltransferase from Proteus mirabilis (strain HI4320).